A 792-amino-acid chain; its full sequence is Kinesin-associated protein 3 (792 aa).

Position 60 is a phosphoserine (serine 60). Positions 103–119 (LSGKEKKEKSSKPKDPP) are enriched in basic and acidic residues. Residues 103-124 (LSGKEKKEKSSKPKDPPPFEGM) form a disordered region. ARM repeat units lie at residues 333–373 (FMEN…NLSF), 374–412 (DTGL…HISM), 494–533 (DGPT…NLTI), 578–620 (DDSC…QMVF), and 621–662 (HQAT…IIAE).

As to quaternary structure, heterotrimer of KIFAP3, KIF3A and KIF3B. Interacts with RAP1GDS1/SMG GDS. Interacts with SMC3 subunit of the cohesin complex. In terms of processing, phosphorylated on tyrosine residues by SRC in vitro; this reduces the binding affinity of the protein for RAP1GDS1.

Involved in tethering the chromosomes to the spindle pole and in chromosome movement. Binds to the tail domain of the KIF3A/KIF3B heterodimer to form a heterotrimeric KIF3 complex and may regulate the membrane binding of this complex. This is Kinesin-associated protein 3 (KIFAP3) from Homo sapiens (Human).